The sequence spans 365 residues: Membrane cofactor protein (365 aa).

A signal peptide spans 1-44 (MTAAPLMPDSTHPCRRRKSYTFFWCSLGVYAEALLFLLSHLSDA). 4 Sushi domains span residues 45–106 (CELP…GCIK), 107–170 (VQCT…HCEK), 171–236 (IYCL…ECKV), and 237–296 (VKCP…KCLK). The Extracellular portion of the chain corresponds to 45–329 (CELPRPFEAM…GIFSQELDAW (285 aa)). 6 disulfides stabilise this stretch: C109–C151, C137–C168, C173–C221, C202–C234, C239–C281, and C267–C294. N181 is a glycosylation site (N-linked (GlcNAc...) asparagine). An O-linked (GalNAc...) threonine glycan is attached at T205. Residues T301 and T304 are each glycosylated (O-linked (GalNAc...) threonine). N-linked (GlcNAc...) asparagine glycosylation occurs at N310. T312 carries an O-linked (GalNAc...) threonine glycan. Residues 330–350 (IIALIVITSIVGVFILCLIVL) form a helical membrane-spanning segment. The Cytoplasmic portion of the chain corresponds to 351 to 365 (RCFEHRKKTNVSAAR).

In terms of assembly, interacts with C3b. Interacts with C4b. Interacts with moesin/MSN. May be O-glycosylated. In terms of processing, N-glycosylated. As to expression, present only in testis (at protein level).

The protein localises to the cytoplasmic vesicle. It localises to the secretory vesicle. The protein resides in the acrosome inner membrane. It is found in the secreted. Its function is as follows. May be involved in the fusion of the spermatozoa with the oocyte during fertilization. The chain is Membrane cofactor protein (Cd46) from Mus musculus (Mouse).